The sequence spans 538 residues: Sucrose transport protein SUT1 (538 aa).

Residues 1-52 lie on the Cytoplasmic side of the membrane; the sequence is MARGSGAGGGGGGGGGGLELSVGVGGGGGARGGGGGEAAAAVETAAPISLGR. A helical membrane pass occupies residues 53–73; the sequence is LILSGMVAGGVQYGWALQLSL. The Extracellular portion of the chain corresponds to 74–81; it reads LTPYVQTL. A helical transmembrane segment spans residues 82 to 102; that stretch reads GLSHALTSFMWLCGPIAGMVV. Residues 103–123 are Cytoplasmic-facing; sequence QPCVGLYSDRCTSKWGRRRPY. A helical membrane pass occupies residues 124–144; the sequence is ILTGCVLICLAVVVIGFSADI. Over 145–162 the chain is Extracellular; the sequence is GYAMGDTKEDCSVYHGSR. A helical transmembrane segment spans residues 163 to 183; it reads WHAAIVYVLGFWLLDFSNNTV. Topologically, residues 184 to 198 are cytoplasmic; it reads QGPARALMADLSGRH. Residues 199–219 form a helical membrane-spanning segment; sequence GPGTANSIFCSWMAMGNILGY. At 220 to 247 the chain is on the extracellular side; sequence SSGSTNNWHKWFPFLKTRACCEACANLK. The chain crosses the membrane as a helical span at residues 248–268; sequence GAFLVAVIFLSLCLVITLIFA. The Cytoplasmic segment spans residues 269-306; it reads KEVPFKGNAALPTKSNEPAEPEGTGPLAVLKGFRNLPT. Residues 307 to 327 form a helical membrane-spanning segment; the sequence is GMPSVLIVTGLTWLSWFPFIL. Over 328–357 the chain is Extracellular; it reads YDTDWMGREIYHGDPKGTDPQIEAFNQGVR. A helical membrane pass occupies residues 358–378; sequence AGAFGLLLNSIVLGFSSFLIE. The Cytoplasmic portion of the chain corresponds to 379-388; the sequence is PMCRKVGPRV. A helical membrane pass occupies residues 389-409; the sequence is VWVTSNFLVCIAMAATALISF. Over 410–433 the chain is Extracellular; the sequence is WSLKDFHGTVQKAITADKSIKAVC. The helical transmembrane segment at 434–454 threads the bilayer; that stretch reads LVLFAFLGVPLAVLYSVPFAV. Over 455–470 the chain is Cytoplasmic; that stretch reads TAQLAATRGGGQGLCT. A helical membrane pass occupies residues 471 to 491; the sequence is GVLNISIVIPQVVIALGAGPW. Topologically, residues 492 to 499 are extracellular; it reads DELFGKGN. A helical membrane pass occupies residues 500–520; the sequence is IPAFGLASGFALIGGVAGIFL. Topologically, residues 521 to 538 are cytoplasmic; that stretch reads LPKISKRQFRSVSMGGGH.

This sequence belongs to the glycoside-pentoside-hexuronide (GPH) cation symporter transporter (TC 2.A.2.4) family. In terms of assembly, homodimer.

The protein resides in the cell membrane. It functions in the pathway glycan biosynthesis; sucrose metabolism. Its function is as follows. Responsible for the transport of sucrose into the cell, with the concomitant uptake of protons (symport system). May also transport other glucosides. May be required for apoplastic phloem sucrose loading in source tissues (e.g. leaves) in order to transport it to sink tissues (e.g. roots, flowers). The chain is Sucrose transport protein SUT1 (SUT1) from Oryza sativa subsp. indica (Rice).